Here is a 729-residue protein sequence, read N- to C-terminus: Fatty acid oxidation complex subunit alpha (729 aa).

The enoyl-CoA hydratase/isomerase stretch occupies residues 1–189 (MLYKGDTLYL…KIGLVDGVVK (189 aa)). Asp296 provides a ligand contact to substrate. The tract at residues 311-729 (ETPKQAAVLG…ARPVGDLKTA (419 aa)) is 3-hydroxyacyl-CoA dehydrogenase. Residues Met324, Asp343, 400-402 (VVE), Lys407, and Ser429 each bind NAD(+). Catalysis depends on His450, which acts as the For 3-hydroxyacyl-CoA dehydrogenase activity. Asn453 lines the NAD(+) pocket. Asn500 and Tyr660 together coordinate substrate. The interval 708 to 729 (RHNEPYYPPVEPARPVGDLKTA) is disordered.

This sequence in the N-terminal section; belongs to the enoyl-CoA hydratase/isomerase family. The protein in the C-terminal section; belongs to the 3-hydroxyacyl-CoA dehydrogenase family. Heterotetramer of two alpha chains (FadB) and two beta chains (FadA).

It catalyses the reaction a (3S)-3-hydroxyacyl-CoA + NAD(+) = a 3-oxoacyl-CoA + NADH + H(+). It carries out the reaction a (3S)-3-hydroxyacyl-CoA = a (2E)-enoyl-CoA + H2O. The enzyme catalyses a 4-saturated-(3S)-3-hydroxyacyl-CoA = a (3E)-enoyl-CoA + H2O. The catalysed reaction is (3S)-3-hydroxybutanoyl-CoA = (3R)-3-hydroxybutanoyl-CoA. It catalyses the reaction a (3Z)-enoyl-CoA = a 4-saturated (2E)-enoyl-CoA. It carries out the reaction a (3E)-enoyl-CoA = a 4-saturated (2E)-enoyl-CoA. Its pathway is lipid metabolism; fatty acid beta-oxidation. Its function is as follows. Involved in the aerobic and anaerobic degradation of long-chain fatty acids via beta-oxidation cycle. Catalyzes the formation of 3-oxoacyl-CoA from enoyl-CoA via L-3-hydroxyacyl-CoA. It can also use D-3-hydroxyacyl-CoA and cis-3-enoyl-CoA as substrate. This chain is Fatty acid oxidation complex subunit alpha, found in Citrobacter koseri (strain ATCC BAA-895 / CDC 4225-83 / SGSC4696).